The chain runs to 204 residues: METPIDAPNKDEHECPRWKKSTVVFVLGGPGSGKGTQCANVVKHFSYTHFSAGDLLRAEIKSGSEFGAMIQSMIAEGRIVPSEITVKLLCKAMEESGNDKFLIDGFPRNEENRNVFENVARIEPAFVLFFDCPEEELERRIMSRNQGREDDNIETIKKRFKVFVESTLPIISYYESKGKLRKINAAKSSEEVFEAVRVLFASET.

Position 31-36 (31-36 (GSGKGT)) interacts with ATP. The NMP stretch occupies residues 51-80 (SAGDLLRAEIKSGSEFGAMIQSMIAEGRIV). A ribonucleoside 5'-phosphate is bound by residues R57, 78-80 (RIV), and 105-108 (GFPR). N112 serves as a coordination point for CMP. The tract at residues 143 to 151 (SRNQGREDD) is LID. Residue R144 participates in ATP binding. Residues R148 and R159 each coordinate a ribonucleoside 5'-phosphate. K187 is an ATP binding site.

It belongs to the adenylate kinase family. UMP-CMP kinase subfamily. Monomer. Requires Mg(2+) as cofactor.

It is found in the cytoplasm. Its subcellular location is the nucleus. It carries out the reaction CMP + ATP = CDP + ADP. It catalyses the reaction dCMP + ATP = dCDP + ADP. The enzyme catalyses UMP + ATP = UDP + ADP. Catalyzes the phosphorylation of pyrimidine nucleoside monophosphates at the expense of ATP. Plays an important role in de novo pyrimidine nucleotide biosynthesis. Has preference for UMP and CMP as phosphate acceptors. This Arabidopsis thaliana (Mouse-ear cress) protein is Probable UMP-CMP kinase 1 (UMK1).